The chain runs to 134 residues: uncharacterized protein (134 aa).

Transmembrane regions (helical) follow at residues 26-46 (VAVF…GNIG), 55-75 (LLKF…QIIV), and 101-121 (YAPM…GLIL).

The protein resides in the membrane. This is an uncharacterized protein from Dictyostelium discoideum (Social amoeba).